A 470-amino-acid polypeptide reads, in one-letter code: Box C/D snoRNA protein 1 (470 aa).

Residues 1–70 (MEFAAENEGK…EEGSGQRPEE (70 aa)) form a disordered region. Ser-25 is subject to Phosphoserine. Gly residues predominate over residues 41-51 (EFGGGEEGTGL). Glycyl lysine isopeptide (Lys-Gly) (interchain with G-Cter in SUMO2) cross-links involve residues Lys-79, Lys-108, Lys-118, Lys-138, Lys-143, Lys-153, Lys-162, Lys-173, Lys-183, and Lys-200. The Zn(2+) site is built by Cys-220, Cys-223, Cys-232, Cys-235, Cys-240, Cys-244, His-248, and Cys-254. The HIT-type zinc finger occupies 220-254 (CETCGTEEAKYRCPRCMRYSCSLPCVKKHKAELTC). Lys-459 participates in a covalent cross-link: Glycyl lysine isopeptide (Lys-Gly) (interchain with G-Cter in SUMO2).

It belongs to the BCD1 family. In terms of assembly, interacts with FBL, SNU13, NOP58, NUFIP1, RUVBL1, RUVBL2 and TAF9. Interacts (via HIT-type zinc finger) with the RUVBL1/RUVBL2 complex in the presence of ADP.

In terms of biological role, required for box C/D snoRNAs accumulation involved in snoRNA processing, snoRNA transport to the nucleolus and ribosome biogenesis. This is Box C/D snoRNA protein 1 (ZNHIT6) from Homo sapiens (Human).